A 476-amino-acid polypeptide reads, in one-letter code: Aspartyl/glutamyl-tRNA(Asn/Gln) amidotransferase subunit B (476 aa).

This sequence belongs to the GatB/GatE family. GatB subfamily. In terms of assembly, heterotrimer of A, B and C subunits.

It carries out the reaction L-glutamyl-tRNA(Gln) + L-glutamine + ATP + H2O = L-glutaminyl-tRNA(Gln) + L-glutamate + ADP + phosphate + H(+). The enzyme catalyses L-aspartyl-tRNA(Asn) + L-glutamine + ATP + H2O = L-asparaginyl-tRNA(Asn) + L-glutamate + ADP + phosphate + 2 H(+). Functionally, allows the formation of correctly charged Asn-tRNA(Asn) or Gln-tRNA(Gln) through the transamidation of misacylated Asp-tRNA(Asn) or Glu-tRNA(Gln) in organisms which lack either or both of asparaginyl-tRNA or glutaminyl-tRNA synthetases. The reaction takes place in the presence of glutamine and ATP through an activated phospho-Asp-tRNA(Asn) or phospho-Glu-tRNA(Gln). The protein is Aspartyl/glutamyl-tRNA(Asn/Gln) amidotransferase subunit B of Shouchella clausii (strain KSM-K16) (Alkalihalobacillus clausii).